A 209-amino-acid chain; its full sequence is Prolactin (209 aa).

An N-terminal signal peptide occupies residues 1–24 (MAQRFKGRSLFLTALLCLASQGYA). Disulfide bonds link Cys70–Cys184 and Cys201–Cys209.

The protein belongs to the somatotropin/prolactin family.

The protein localises to the secreted. The polypeptide is Prolactin (prl) (Anguilla anguilla (European freshwater eel)).